The chain runs to 368 residues: tRNA 2-selenouridine synthase (368 aa).

In terms of domain architecture, Rhodanese spans 15–138 (FLNQHPIMDV…MRQYLIGVIE (124 aa)). C98 functions as the S-selanylcysteine intermediate in the catalytic mechanism.

The protein belongs to the SelU family. In terms of assembly, monomer.

It catalyses the reaction 5-methylaminomethyl-2-thiouridine(34) in tRNA + selenophosphate + (2E)-geranyl diphosphate + H2O + H(+) = 5-methylaminomethyl-2-selenouridine(34) in tRNA + (2E)-thiogeraniol + phosphate + diphosphate. It carries out the reaction 5-methylaminomethyl-2-thiouridine(34) in tRNA + (2E)-geranyl diphosphate = 5-methylaminomethyl-S-(2E)-geranyl-thiouridine(34) in tRNA + diphosphate. The catalysed reaction is 5-methylaminomethyl-S-(2E)-geranyl-thiouridine(34) in tRNA + selenophosphate + H(+) = 5-methylaminomethyl-2-(Se-phospho)selenouridine(34) in tRNA + (2E)-thiogeraniol. The enzyme catalyses 5-methylaminomethyl-2-(Se-phospho)selenouridine(34) in tRNA + H2O = 5-methylaminomethyl-2-selenouridine(34) in tRNA + phosphate. Involved in the post-transcriptional modification of the uridine at the wobble position (U34) of tRNA(Lys), tRNA(Glu) and tRNA(Gln). Catalyzes the conversion of 2-thiouridine (S2U-RNA) to 2-selenouridine (Se2U-RNA). Acts in a two-step process involving geranylation of 2-thiouridine (S2U) to S-geranyl-2-thiouridine (geS2U) and subsequent selenation of the latter derivative to 2-selenouridine (Se2U) in the tRNA chain. The protein is tRNA 2-selenouridine synthase of Shewanella baltica (strain OS185).